We begin with the raw amino-acid sequence, 187 residues long: Transmembrane protein 17A (187 aa).

The next 4 membrane-spanning stretches (helical) occupy residues 49–69 (IFLY…VIML), 82–102 (FILV…LYLG), 114–134 (LAGF…FLLC), and 146–166 (AVHG…IFAL).

It belongs to the TMEM17 family. Part of the tectonic-like complex (also named B9 complex).

Its subcellular location is the cell projection. The protein resides in the cilium membrane. In terms of biological role, transmembrane component of the tectonic-like complex, a complex localized at the transition zone of primary cilia and acting as a barrier that prevents diffusion of transmembrane proteins between the cilia and plasma membranes. Required for ciliogenesis and sonic hedgehog/SHH signaling. The sequence is that of Transmembrane protein 17A (tmem17-a) from Xenopus tropicalis (Western clawed frog).